A 277-amino-acid polypeptide reads, in one-letter code: Putative phosphoenolpyruvate synthase regulatory protein (277 aa).

ADP is bound at residue 157 to 164; that stretch reads GVSRCGKT.

It belongs to the pyruvate, phosphate/water dikinase regulatory protein family. PSRP subfamily.

It catalyses the reaction [pyruvate, water dikinase] + ADP = [pyruvate, water dikinase]-phosphate + AMP + H(+). The enzyme catalyses [pyruvate, water dikinase]-phosphate + phosphate + H(+) = [pyruvate, water dikinase] + diphosphate. In terms of biological role, bifunctional serine/threonine kinase and phosphorylase involved in the regulation of the phosphoenolpyruvate synthase (PEPS) by catalyzing its phosphorylation/dephosphorylation. The protein is Putative phosphoenolpyruvate synthase regulatory protein of Klebsiella pneumoniae (strain 342).